The sequence spans 344 residues: MAQKENSYPWPYGRQTAPSGLSTLPQRVLRKEPVTPSALVLMSRSNVQPTAAPGQKVMENSSGTPDILTRHFTIDDFEIGRPLGKGKFGNVYLAREKKSHFIVALKVLFKSQIEKEGVEHQLRREIEIQAHLHHPNILRLYNYFYDRRRIYLILEYAPRGELYKELQKSCTFDEQRTATIMEELADALMYCHGKKVIHRDIKPENLLLGLKGELKIADFGWSVHAPSLRRKTMCGTLDYLPPEMIEGRMHNEKVDLWCIGVLCYELLVGNPPFESASHNETYRRIVKVDLKFPASVPMGAQDLISKLLRHNPSERLPLAQVSAHPWVRANSRRVLPPSALQSVA.

The disordered stretch occupies residues Met-1 to Ser-22. A Phosphothreonine modification is found at Thr-35. Residue Ser-62 is modified to Phosphoserine. Residue Thr-64 is modified to Phosphothreonine. Residues Phe-77–Val-327 enclose the Protein kinase domain. Residues Leu-83–Val-91 and Lys-106 each bind ATP. The active-site Proton acceptor is Asp-200. Lys-215 is modified (N6-acetyllysine). Ser-227 carries the post-translational modification Phosphoserine. Thr-232 is subject to Phosphothreonine; by autocatalysis.

The protein belongs to the protein kinase superfamily. Ser/Thr protein kinase family. Aurora subfamily. Component of the chromosomal passenger complex (CPC) composed of at least BIRC5/survivin, CDCA8/borealin, INCENP, AURKB or AURKC; predominantly independent AURKB- and AURKC-containing complexes exist. Associates with RACGAP1 during M phase. Interacts with SPDYC; this interaction may be required for proper localization of active, Thr-232-phosphorylated AURKB form during prometaphase and metaphase. Interacts with p53/TP53. Interacts (via the middle kinase domain) with NOC2L (via the N- and C-terminus domains). Interacts with CDCA1. Interacts with EVI5. Interacts with JTB. Interacts with NDC80. Interacts with PSMA3. Interacts with RNF2/RING1B. Interacts with SEPTIN1. Interacts with SIRT2. Interacts with TACC1. Interacts with TTC28. The phosphorylation of Thr-232 requires the binding to INCENP and occurs by means of an autophosphorylation mechanism. Thr-232 phosphorylation is indispensable for the AURKB kinase activity. Post-translationally, acetylated at Lys-215 by KAT5 at kinetochores, increasing AURKB activity and promoting accurate chromosome segregation in mitosis. In terms of processing, ubiquitinated by different BCR (BTB-CUL3-RBX1) E3 ubiquitin ligase complexes. Ubiquitinated by the BCR(KLHL9-KLHL13) E3 ubiquitin ligase complex, ubiquitination leads to removal from mitotic chromosomes and is required for cytokinesis. During anaphase, the BCR(KLHL21) E3 ubiquitin ligase complex recruits the CPC complex from chromosomes to the spindle midzone and mediates the ubiquitination of AURKB. Ubiquitination of AURKB by BCR(KLHL21) E3 ubiquitin ligase complex may not lead to its degradation by the proteasome. Deubiquitinated by USP35; inhibiting CDH1-mediated degradation of AURKB. In terms of tissue distribution, high level expression seen in the thymus. It is also expressed in the spleen, lung, testis, colon, placenta and fetal liver. Expressed during S and G2/M phase and expression is up-regulated in cancer cells during M phase. As to expression, not expressed in normal liver, high expression in metastatic liver.

It is found in the nucleus. The protein resides in the chromosome. It localises to the centromere. The protein localises to the kinetochore. Its subcellular location is the cytoplasm. It is found in the cytoskeleton. The protein resides in the spindle. It localises to the midbody. The enzyme catalyses L-seryl-[protein] + ATP = O-phospho-L-seryl-[protein] + ADP + H(+). It carries out the reaction L-threonyl-[protein] + ATP = O-phospho-L-threonyl-[protein] + ADP + H(+). Its activity is regulated as follows. Activity is greatly increased when AURKB is within the CPC complex. In particular, AURKB-phosphorylated INCENP acts as an activator of AURKB. Positive feedback between HASPIN and AURKB contributes to CPC localization. Inhibited by ZM447439. Its function is as follows. Serine/threonine-protein kinase component of the chromosomal passenger complex (CPC), a complex that acts as a key regulator of mitosis. The CPC complex has essential functions at the centromere in ensuring correct chromosome alignment and segregation and is required for chromatin-induced microtubule stabilization and spindle assembly. Involved in the bipolar attachment of spindle microtubules to kinetochores and is a key regulator for the onset of cytokinesis during mitosis. Required for central/midzone spindle assembly and cleavage furrow formation. Key component of the cytokinesis checkpoint, a process required to delay abscission to prevent both premature resolution of intercellular chromosome bridges and accumulation of DNA damage: phosphorylates CHMP4C, leading to retain abscission-competent VPS4 (VPS4A and/or VPS4B) at the midbody ring until abscission checkpoint signaling is terminated at late cytokinesis. AURKB phosphorylates the CPC complex subunits BIRC5/survivin, CDCA8/borealin and INCENP. Phosphorylation of INCENP leads to increased AURKB activity. Other known AURKB substrates involved in centromeric functions and mitosis are CENPA, DES/desmin, GPAF, KIF2C, NSUN2, RACGAP1, SEPTIN1, VIM/vimentin, HASPIN, and histone H3. A positive feedback loop involving HASPIN and AURKB contributes to localization of CPC to centromeres. Phosphorylation of VIM controls vimentin filament segregation in cytokinetic process, whereas histone H3 is phosphorylated at 'Ser-10' and 'Ser-28' during mitosis (H3S10ph and H3S28ph, respectively). AURKB is also required for kinetochore localization of BUB1 and SGO1. Phosphorylation of p53/TP53 negatively regulates its transcriptional activity. Key regulator of active promoters in resting B- and T-lymphocytes: acts by mediating phosphorylation of H3S28ph at active promoters in resting B-cells, inhibiting RNF2/RING1B-mediated ubiquitination of histone H2A and enhancing binding and activity of the USP16 deubiquitinase at transcribed genes. Acts as an inhibitor of CGAS during mitosis: catalyzes phosphorylation of the N-terminus of CGAS during the G2-M transition, blocking CGAS liquid phase separation and activation, and thereby preventing CGAS-induced autoimmunity. Phosphorylates KRT5 during anaphase and telophase. Phosphorylates ATXN10 which promotes phosphorylation of ATXN10 by PLK1 and may play a role in the regulation of cytokinesis and stimulating the proteasomal degradation of ATXN10. In Homo sapiens (Human), this protein is Aurora kinase B (AURKB).